Consider the following 239-residue polypeptide: uncharacterized protein (239 aa).

The next 7 helical transmembrane spans lie at 20–40, 48–68, 80–100, 106–126, 143–163, 164–184, and 192–212; these read ILIWVQCLILMSVCAFCWLVL, FSSVRLTLSCLMISIVCLGLL, WILLTYTLLTSVAVTASGFHF, IYAMVATVTLFCFLTLATYLF, LILLLFAVFSLFPEAVSEILV, MIAGLAVIVTSVVCDTQDILH, and IPGALCLYMDLMYLFVSVLYF.

This sequence belongs to the cytomegalovirus US12 family.

The protein localises to the membrane. This is an uncharacterized protein from Homo sapiens (Human).